The following is a 227-amino-acid chain: Cytochrome c oxidase subunit 2 (227 aa).

Residues 1 to 14 (MAYPFQLGLQDATS) lie on the Mitochondrial intermembrane side of the membrane. The helical transmembrane segment at 15–45 (PIMEELMNFHDHTLMIVFLISSLVLYIISLM) threads the bilayer. The Mitochondrial matrix portion of the chain corresponds to 46-59 (LTTKLTHTSTMDAQ). The chain crosses the membrane as a helical span at residues 60 to 87 (EVETIWTILPAVILILIALPSLRILYMM). Topologically, residues 88–227 (DEINNPVLTV…NFENWSTSMI (140 aa)) are mitochondrial intermembrane. Cu cation contacts are provided by H161, C196, E198, C200, H204, and M207. E198 serves as a coordination point for Mg(2+).

The protein belongs to the cytochrome c oxidase subunit 2 family. Component of the cytochrome c oxidase (complex IV, CIV), a multisubunit enzyme composed of 14 subunits. The complex is composed of a catalytic core of 3 subunits MT-CO1, MT-CO2 and MT-CO3, encoded in the mitochondrial DNA, and 11 supernumerary subunits COX4I, COX5A, COX5B, COX6A, COX6B, COX6C, COX7A, COX7B, COX7C, COX8 and NDUFA4, which are encoded in the nuclear genome. The complex exists as a monomer or a dimer and forms supercomplexes (SCs) in the inner mitochondrial membrane with NADH-ubiquinone oxidoreductase (complex I, CI) and ubiquinol-cytochrome c oxidoreductase (cytochrome b-c1 complex, complex III, CIII), resulting in different assemblies (supercomplex SCI(1)III(2)IV(1) and megacomplex MCI(2)III(2)IV(2)). Found in a complex with TMEM177, COA6, COX18, COX20, SCO1 and SCO2. Interacts with TMEM177 in a COX20-dependent manner. Interacts with COX20. Interacts with COX16. It depends on Cu cation as a cofactor.

It is found in the mitochondrion inner membrane. It carries out the reaction 4 Fe(II)-[cytochrome c] + O2 + 8 H(+)(in) = 4 Fe(III)-[cytochrome c] + 2 H2O + 4 H(+)(out). In terms of biological role, component of the cytochrome c oxidase, the last enzyme in the mitochondrial electron transport chain which drives oxidative phosphorylation. The respiratory chain contains 3 multisubunit complexes succinate dehydrogenase (complex II, CII), ubiquinol-cytochrome c oxidoreductase (cytochrome b-c1 complex, complex III, CIII) and cytochrome c oxidase (complex IV, CIV), that cooperate to transfer electrons derived from NADH and succinate to molecular oxygen, creating an electrochemical gradient over the inner membrane that drives transmembrane transport and the ATP synthase. Cytochrome c oxidase is the component of the respiratory chain that catalyzes the reduction of oxygen to water. Electrons originating from reduced cytochrome c in the intermembrane space (IMS) are transferred via the dinuclear copper A center (CU(A)) of subunit 2 and heme A of subunit 1 to the active site in subunit 1, a binuclear center (BNC) formed by heme A3 and copper B (CU(B)). The BNC reduces molecular oxygen to 2 water molecules using 4 electrons from cytochrome c in the IMS and 4 protons from the mitochondrial matrix. This is Cytochrome c oxidase subunit 2 (MT-CO2) from Apodemus mystacinus (Broad-toothed field mouse).